Consider the following 410-residue polypeptide: uncharacterized protein (410 aa).

Helical transmembrane passes span 14–34 (IIIGTIFGRMATSMSIPFLAI), 48–68 (GLVIAASSSVGILASFYGGYI), 82–102 (IFGWMLVFAGFAAASNLWVFF), 140–160 (YAAINIGVVFGPVLGLYFGSS), 164–184 (TPFLVPAVIYGLYGIVLALQF), 212–232 (YLFTIALVGITLCTFGYSQFS), 251–271 (LYGLMLTLNAIVVLATQFPIV), 279–299 (PLCSLMLGNVMVSISMAIFTV), 303–323 (VPSIVMIVITFTIGEVLLFSM), 342–362 (GAIGFSQLGNVIGPWVGGICI), and 371–391 (IYIFSVLSGITLLGLPFLAFA).

The protein belongs to the major facilitator superfamily. TCR/Tet family.

The protein resides in the cell membrane. This is an uncharacterized protein from Bacillus subtilis (strain 168).